Here is a 59-residue protein sequence, read N- to C-terminus: uncharacterized protein (59 aa).

Residues Ser-27–Phe-59 form a disordered region. Polar residues predominate over residues Ser-48–Phe-59.

This is an uncharacterized protein from Homo sapiens (Human).